A 936-amino-acid chain; its full sequence is Protocadherin alpha-5 (936 aa).

The N-terminal stretch at 1–28 is a signal peptide; the sequence is MVYSRRGSLGSRLLLLWLLLAYWKAGSG. Topologically, residues 29–696 are extracellular; that stretch reads QLHYSIPEEA…GPEAALVDVN (668 aa). Cadherin domains follow at residues 33–132, 156–241, 242–349, 350–454, 455–564, and 580–677; these read SIPE…PPRF, ASDL…APEF, DKSI…TPEM, AITT…APAF, AQPQ…APAL, and VPRS…APKA. Residue asparagine 264 is glycosylated (N-linked (GlcNAc...) asparagine). N-linked (GlcNAc...) asparagine glycosylation occurs at asparagine 547. A helical membrane pass occupies residues 697–717; the sequence is VYLIIAICAVSSLLVLTLLLY. Topologically, residues 718 to 936 are cytoplasmic; the sequence is TALRCSAQPT…GNSTTDNSDQ (219 aa). 2 disordered regions span residues 759–793 and 816–936; these read SGEAPPKTDLMAFSPSLPQGPTSTDNPRQPNPDWR and AGPG…NSDQ. PXXP repeat units follow at residues 773–776, 785–788, 818–821, 873–876, and 877–890; these read PSLP, PRQP, PGGP, KFII, and PGSPAIISIRQEPT. Positions 773–890 are 5 X 4 AA repeats of P-X-X-P; sequence PSLPQGPTST…AIISIRQEPT (118 aa). A compositionally biased stretch (polar residues) spans 774-786; the sequence is SLPQGPTSTDNPR. Basic and acidic residues predominate over residues 895–909; sequence DKSDFITFGKKEETK.

It localises to the cell membrane. Its function is as follows. Potential calcium-dependent cell-adhesion protein. May be involved in the establishment and maintenance of specific neuronal connections in the brain. The chain is Protocadherin alpha-5 (PCDHA5) from Homo sapiens (Human).